Reading from the N-terminus, the 193-residue chain is Major structural subunit of bundle-forming pilus (193 aa).

Positions 1 to 13 (MVSKIMNKKYEKG) are cleaved as a propeptide — leader sequence. At Leu14 the chain carries N-methylleucine. Residues 14–35 (LSLIESAMVLALAATVTAGVMF) form a helical membrane-spanning segment. Cysteines 129 and 179 form a disulfide.

Belongs to the N-Me-Phe pilin family. As to quaternary structure, 10 to 100 laterally aligned filaments or bundle-forming pili coalesce into rope-like bundles. These form linkages between the bacteria within the enteropathogenic E.coli (EPEC) microcolonies that are attached to epithelial cells.

The protein localises to the fimbrium. It is found in the membrane. Major component of type IV bundle-forming pili (BFP) that plays a role in adherence to host cells and virulence. The protein is Major structural subunit of bundle-forming pilus (bfpA) of Escherichia coli O127:H6 (strain E2348/69 / EPEC).